We begin with the raw amino-acid sequence, 211 residues long: Ribosomal RNA small subunit methyltransferase G (211 aa).

S-adenosyl-L-methionine is bound by residues Gly-73, Ile-126–Glu-127, and Arg-142.

The protein belongs to the methyltransferase superfamily. RNA methyltransferase RsmG family.

The protein localises to the cytoplasm. The catalysed reaction is guanosine(527) in 16S rRNA + S-adenosyl-L-methionine = N(7)-methylguanosine(527) in 16S rRNA + S-adenosyl-L-homocysteine. Its function is as follows. Specifically methylates the N7 position of guanine in position 527 of 16S rRNA. The protein is Ribosomal RNA small subunit methyltransferase G of Methylorubrum extorquens (strain PA1) (Methylobacterium extorquens).